We begin with the raw amino-acid sequence, 183 residues long: Transmembrane protein 52B (183 aa).

A signal peptide spans 1 to 24 (MGVRVHVVAASALLYFILLSGTRC). The helical transmembrane segment at 40–60 (VHLWYIWLLVVIGALLLLCGL) threads the bilayer. The interval 158–183 (DLPPVPEEKQLPPTEKESTRIVDSWN) is disordered. Residues 163-177 (PEEKQLPPTEKESTR) show a composition bias toward basic and acidic residues.

Its subcellular location is the membrane. In Homo sapiens (Human), this protein is Transmembrane protein 52B (TMEM52B).